A 526-amino-acid polypeptide reads, in one-letter code: Peptide chain release factor 3 (526 aa).

Residues 8–277 enclose the tr-type G domain; that stretch reads NKRRTFAIIS…GLTEWAPKPQ (270 aa). Residues 17–24, 85–89, and 139–142 contribute to the GTP site; these read SHPDAGKT, DTPGH, and NKLD.

It belongs to the TRAFAC class translation factor GTPase superfamily. Classic translation factor GTPase family. PrfC subfamily.

The protein resides in the cytoplasm. Functionally, increases the formation of ribosomal termination complexes and stimulates activities of RF-1 and RF-2. It binds guanine nucleotides and has strong preference for UGA stop codons. It may interact directly with the ribosome. The stimulation of RF-1 and RF-2 is significantly reduced by GTP and GDP, but not by GMP. This Actinobacillus pleuropneumoniae serotype 7 (strain AP76) protein is Peptide chain release factor 3.